A 272-amino-acid chain; its full sequence is Pyridoxal phosphate phosphatase YbhA (272 aa).

D9 (nucleophile) is an active-site residue. A Mg(2+)-binding site is contributed by D9. L10 contacts phosphate. Mg(2+) is bound at residue D11. Phosphate is bound by residues T43–G44 and K200. D223 provides a ligand contact to Mg(2+). N226 lines the phosphate pocket.

This sequence belongs to the HAD-like hydrolase superfamily. CbbY/CbbZ/Gph/YieH family. The cofactor is Mg(2+). Requires Mn(2+) as cofactor. It depends on Co(2+) as a cofactor. Zn(2+) serves as cofactor.

The enzyme catalyses pyridoxal 5'-phosphate + H2O = pyridoxal + phosphate. In terms of biological role, catalyzes the dephosphorylation of pyridoxal-phosphate (PLP). Can also hydrolyze erythrose-4-phosphate (Ery4P) and fructose-1,6-bis-phosphate (Fru1,6bisP). This chain is Pyridoxal phosphate phosphatase YbhA (ybhA), found in Escherichia coli (strain K12).